The following is a 1257-amino-acid chain: Phosphatidylinositol 3,4,5-trisphosphate 5-phosphatase 2 (1257 aa).

An SH2 domain is found at 21 to 117 (WYHRDLSRAA…GLVCALLLPV (97 aa)). Over residues 119–132 (GEREPDPPDDRDAS) the composition is skewed to basic and acidic residues. The disordered stretch occupies residues 119 to 181 (GEREPDPPDD…ESTPNGLSTV (63 aa)). Ser132 carries the post-translational modification Phosphoserine. Over residues 156-166 (PSSPLPTPETP) the composition is skewed to pro residues. Thr165 is subject to Phosphothreonine. Ser241 and Ser353 each carry phosphoserine. Tyr887 carries the post-translational modification Phosphotyrosine. Ser891 is subject to Phosphoserine. The segment at 897–986 (TGAKSKVPSV…PPKNSFNNPA (90 aa)) is disordered. Residues 939–951 (PPPTGRPPAPPRA) show a composition bias toward pro residues. Residues 945–950 (PPAPPR) carry the SH3-binding motif. Over residues 952–966 (VPREEPLNPRLKSEG) the composition is skewed to basic and acidic residues. The NPXY motif signature appears at 984–987 (NPAY). Tyr987 bears the Phosphotyrosine mark. Residues 999-1008 (PLEPPSLARA) are compositionally biased toward low complexity. The disordered stretch occupies residues 999 to 1119 (PLEPPSLARA…FLGEVASGDD (121 aa)). Composition is skewed to pro residues over residues 1049-1060 (LPPPDFPPPPLP) and 1088-1104 (GPPP…PPGT). Residue Ser1132 is modified to Phosphoserine. A disordered region spans residues 1134–1196 (VDYAPGPGRS…PQGGRASGLG (63 aa)). Phosphotyrosine occurs at positions 1136 and 1161. Positions 1195–1257 (LGEAGMGAWL…LLLDTLQLSK (63 aa)) constitute an SAM domain. Ser1256 is subject to Phosphoserine.

It belongs to the inositol 1,4,5-trisphosphate 5-phosphatase family. In terms of assembly, interacts with tyrosine phosphorylated form of SHC1. Interacts with EGFR. Upon stimulation by the EGF signaling pathway, it forms a complex with SHC1 and EGFR. Interacts with cytoskeletal protein SORBS3/vinexin, promoting its localization to the periphery of cells. Forms a complex with filamin (FLNA or FLNB), actin, GPIb (GP1BA or GP1BB) that regulates cortical and submembraneous actin. Interacts with c-Met/MET, when c-Met/MET is phosphorylated on 'Tyr-1356'. Interacts with p130Cas/BCAR1. Interacts with CENTD3/ARAP3 via its SAM domain. Interacts with c-Cbl/CBL and CAP/SORBS1. Interacts with activated EPHA2 receptor. Interacts with receptors FCGR2A. Interacts with FCGR2B. Interacts with tyrosine kinase ABL1. Interacts with tyrosine kinase TEC. Interacts with CSF1R. Interacts (via N-terminus) with SH3YL1 (via SH3 domain). Interacts (via SH2 domain) with tyrosine phosphorylated KLRC1 (via ITIM). Interacts with NEDD9/HEF1. Post-translationally, tyrosine phosphorylated by the members of the SRC family after exposure to a diverse array of extracellular stimuli such as insulin, growth factors such as EGF or PDGF, chemokines, integrin ligands and hypertonic and oxidative stress. May be phosphorylated upon IgG receptor FCGR2B-binding. Phosphorylated at Tyr-987 following cell attachment and spreading. Phosphorylated at Tyr-1161 following EGF signaling pathway stimulation. In terms of tissue distribution, widely expressed.

It localises to the cytoplasm. It is found in the cytosol. The protein resides in the cytoskeleton. The protein localises to the membrane. Its subcellular location is the cell projection. It localises to the filopodium. It is found in the lamellipodium. The protein resides in the basal cell membrane. The protein localises to the nucleus. Its subcellular location is the nucleus speckle. It localises to the spindle pole. The catalysed reaction is a 1,2-diacyl-sn-glycero-3-phospho-(1D-myo-inositol-3,4,5-trisphosphate) + H2O = a 1,2-diacyl-sn-glycero-3-phospho-(1D-myo-inositol-3,4-bisphosphate) + phosphate. The enzyme catalyses 1,2-dioctanoyl-sn-glycero-3-phospho-(1D-myo-inositol-3,4,5-trisphosphate) + H2O = 1,2-dioctanoyl-sn-glycero-3-phospho-(1D-myo-inositol-3,4-bisphosphate) + phosphate. It catalyses the reaction 1,2-dihexadecanoyl-sn-glycero-3-phospho-(1D-myo-inositol-3,4,5-trisphosphate) + H2O = 1,2-dihexadecanoyl-sn-glycero-3-phospho-(1D-myo-inositol-3,4-bisphosphate) + phosphate. Activated upon translocation to the sites of synthesis of PtdIns(3,4,5)P3 in the membrane. Enzymatic activity is enhanced in the presence of phosphatidylserine. In terms of biological role, phosphatidylinositol (PtdIns) phosphatase that specifically hydrolyzes the 5-phosphate of phosphatidylinositol-3,4,5-trisphosphate (PtdIns(3,4,5)P3) to produce PtdIns(3,4)P2, thereby negatively regulating the PI3K (phosphoinositide 3-kinase) pathways. Required for correct mitotic spindle orientation and therefore progression of mitosis. Plays a central role in regulation of PI3K-dependent insulin signaling, although the precise molecular mechanisms and signaling pathways remain unclear. While overexpression reduces both insulin-stimulated MAP kinase and Akt activation, its absence does not affect insulin signaling or GLUT4 trafficking. Confers resistance to dietary obesity. May act by regulating AKT2, but not AKT1, phosphorylation at the plasma membrane. Part of a signaling pathway that regulates actin cytoskeleton remodeling. Required for the maintenance and dynamic remodeling of actin structures as well as in endocytosis, having a major impact on ligand-induced EGFR internalization and degradation. Participates in regulation of cortical and submembraneous actin by hydrolyzing PtdIns(3,4,5)P3 thereby regulating membrane ruffling. Regulates cell adhesion and cell spreading. Required for HGF-mediated lamellipodium formation, cell scattering and spreading. Acts as a negative regulator of EPHA2 receptor endocytosis by inhibiting via PI3K-dependent Rac1 activation. Acts as a regulator of neuritogenesis by regulating PtdIns(3,4,5)P3 level and is required to form an initial protrusive pattern, and later, maintain proper neurite outgrowth. Acts as a negative regulator of the FC-gamma-RIIA receptor (FCGR2A). Mediates signaling from the FC-gamma-RIIB receptor (FCGR2B), playing a central role in terminating signal transduction from activating immune/hematopoietic cell receptor systems. Upon stimulation by EGF, it is recruited by EGFR and dephosphorylates PtdIns(3,4,5)P3. Plays a negative role in regulating the PI3K-PKB pathway, possibly by inhibiting PKB activity. Down-regulates Fc-gamma-R-mediated phagocytosis in macrophages independently of INPP5D/SHIP1. In macrophages, down-regulates NF-kappa-B-dependent gene transcription by regulating macrophage colony-stimulating factor (M-CSF)-induced signaling. Plays a role in the localization of AURKA and NEDD9/HEF1 to the basolateral membrane at interphase in polarized cysts, thereby mediates cell cycle homeostasis, cell polarization and cilia assembly. Additionally promotion of cilia growth is also facilitated by hydrolysis of (PtdIns(3,4,5)P3) to PtdIns(3,4)P2. Promotes formation of apical membrane-initiation sites during the initial stages of lumen formation via Rho family-induced actin filament organization and CTNNB1 localization to cell-cell contacts. May also hydrolyze PtdIns(1,3,4,5)P4, and could thus affect the levels of the higher inositol polyphosphates like InsP6. Involved in endochondral ossification. This chain is Phosphatidylinositol 3,4,5-trisphosphate 5-phosphatase 2, found in Mus musculus (Mouse).